The primary structure comprises 161 residues: Ribosome maturation factor RimP (161 aa).

The protein belongs to the RimP family.

It localises to the cytoplasm. Functionally, required for maturation of 30S ribosomal subunits. This is Ribosome maturation factor RimP from Janthinobacterium sp. (strain Marseille) (Minibacterium massiliensis).